We begin with the raw amino-acid sequence, 629 residues long: Myotonin-protein kinase (629 aa).

Topologically, residues 1-590 are cytoplasmic; it reads MSAEVRLRRL…PRPGLSEALS (590 aa). The region spanning 71 to 339 is the Protein kinase domain; the sequence is FEILKVIGRG…AGDFRTHPFF (269 aa). ATP is bound by residues 77–85 and Lys-100; that span reads IGRGAFSEV. The active-site Proton acceptor is the Asp-195. 2 positions are modified to phosphoserine; by autocatalysis: Ser-216 and Ser-228. Thr-234 is modified (phosphothreonine; by autocatalysis). The AGC-kinase C-terminal domain maps to 340-415; that stretch reads FGLDWDGLRD…SCMALRDSEV (76 aa). Positions 457–536 form a coiled coil; the sequence is VPAAEAEAEV…LQAEGATAVT (80 aa). Residues 591 to 611 form a helical; Anchor for type IV membrane protein membrane-spanning segment; the sequence is LLLFAVVLSRAAALGCIGLVA. Topologically, residues 612 to 629 are lumenal; that stretch reads HAGQLTAVWRRPGAARAP.

The protein belongs to the protein kinase superfamily. AGC Ser/Thr protein kinase family. DMPK subfamily. Homodimer; homodimerization stimulates the kinase activity. Interacts with HSPB2; may enhance DMPK kinase activity. Interacts with PLN; phosphorylates PLN. May interact with RAC1; may regulate DMPK kinase activity. Interacts with LMNA; may regulate nuclear envelope stability. The cofactor is Mg(2+). Phosphorylated. Autophosphorylates. Phosphorylation by RAF1 may result in activation of DMPK. In terms of processing, proteolytic processing of the C-terminus may remove the transmembrane domain and release the kinase from membranes stimulating its activity. As to expression, most isoforms are expressed in many tissues including heart, skeletal muscle, liver and brain, except for isoform 2 which is only found in the heart and skeletal muscle, and isoform 14 which is only found in the brain, with high levels in the striatum, cerebellar cortex and pons.

Its subcellular location is the endoplasmic reticulum membrane. It is found in the nucleus outer membrane. The protein resides in the mitochondrion outer membrane. It localises to the sarcoplasmic reticulum membrane. The protein localises to the cell membrane. Its subcellular location is the cytoplasm. It is found in the cytosol. The protein resides in the mitochondrion membrane. The catalysed reaction is L-seryl-[protein] + ATP = O-phospho-L-seryl-[protein] + ADP + H(+). It catalyses the reaction L-threonyl-[protein] + ATP = O-phospho-L-threonyl-[protein] + ADP + H(+). Coiled-coil-mediated oligomerization enhances the catalytic activity. Proteolytic processing of the C-terminus may release the protein from membranes and constitute a mean to regulate the enzyme. May be regulated by HSPB2, RAC1, RAF1 and G-protein second messengers. Its function is as follows. Non-receptor serine/threonine protein kinase which is necessary for the maintenance of skeletal muscle structure and function. May play a role in myocyte differentiation and survival by regulating the integrity of the nuclear envelope and the expression of muscle-specific genes. May also phosphorylate PPP1R12A and inhibit the myosin phosphatase activity to regulate myosin phosphorylation. Also critical to the modulation of cardiac contractility and to the maintenance of proper cardiac conduction activity probably through the regulation of cellular calcium homeostasis. Phosphorylates PLN, a regulator of calcium pumps and may regulate sarcoplasmic reticulum calcium uptake in myocytes. May also phosphorylate FXYD1/PLM which is able to induce chloride currents. May also play a role in synaptic plasticity. The protein is Myotonin-protein kinase (DMPK) of Homo sapiens (Human).